Consider the following 511-residue polypeptide: Vesicular acetylcholine transporter (511 aa).

Over methionine 1 to lysine 36 the chain is Cytoplasmic. A helical membrane pass occupies residues isoleucine 37–valine 57. The Lumenal, vesicle portion of the chain corresponds to proline 58–glycine 108. N-linked (GlcNAc...) asparagine glycosylation is found at asparagine 80, asparagine 83, and asparagine 88. A helical transmembrane segment spans residues valine 109 to isoleucine 129. Residues aspartate 130–aspartate 135 are Cytoplasmic-facing. The chain crosses the membrane as a helical span at residues isoleucine 136 to glutamate 156. Topologically, residues serine 157–arginine 165 are lumenal, vesicle. The helical transmembrane segment at serine 166–lysine 186 threads the bilayer. Topologically, residues tyrosine 187–leucine 197 are cytoplasmic. The chain crosses the membrane as a helical span at residues glycine 198 to leucine 218. At tyrosine 219–tryptophan 225 the chain is on the lumenal, vesicle side. A helical membrane pass occupies residues valine 226 to valine 246. The Cytoplasmic segment spans residues threonine 247–methionine 267. A helical membrane pass occupies residues isoleucine 268–phenylalanine 288. At leucine 289–tryptophan 306 the chain is on the lumenal, vesicle side. Residue asparagine 302 is glycosylated (N-linked (GlcNAc...) asparagine). A helical transmembrane segment spans residues glutamine 307–valine 327. The Cytoplasmic segment spans residues lysine 328–glutamine 337. Residues tryptophan 338–cysteine 358 traverse the membrane as a helical segment. The Lumenal, vesicle segment spans residues arginine 359–glutamate 363. A helical membrane pass occupies residues leucine 364–proline 384. Topologically, residues threonine 385 to serine 400 are cytoplasmic. A helical membrane pass occupies residues valine 401–glycine 421. The Lumenal, vesicle segment spans residues glutamine 422 to glycine 428. The chain crosses the membrane as a helical span at residues phenylalanine 429 to phenylalanine 449. Over leucine 450–glutamate 511 the chain is Cytoplasmic. A disordered region spans residues alanine 486 to glutamate 511.

The protein belongs to the major facilitator superfamily. Vesicular transporter family. High expression in the electric lobe of the brain.

The protein localises to the membrane. Involved in acetylcholine transport into synaptic vesicles. This chain is Vesicular acetylcholine transporter, found in Torpedo torpedo (Common torpedo).